Here is a 315-residue protein sequence, read N- to C-terminus: Vomeronasal type-1 receptor 54 (315 aa).

At 1–15 (MNKMNRLSHNTEIRN) the chain is on the extracellular side. A helical membrane pass occupies residues 16–40 (AIYSGVGIGISGNSFLLLFHIFKYI). Topologically, residues 41–51 (RGQRSRHIDLP) are cytoplasmic. A helical transmembrane segment spans residues 52-71 (IGLLSLIHLVMLIAMSLVAT). Residues 72-90 (DIFMPWGRWGDTTCKCVIS) lie on the Extracellular side of the membrane. C85 and C172 form a disulfide bridge. A helical transmembrane segment spans residues 91 to 112 (LYRFCRSLSLCATSLLSILQAV). Over 113-132 (TLNPRNSCLEKFKRKSPHYM) the chain is Cytoplasmic. A helical transmembrane segment spans residues 133–154 (LGCLLFLSVFYTFISSPLATYI). The Extracellular portion of the chain corresponds to 155-193 (TAKSNLTSPSFTYITTSCSLAPMSYSFHLTVFILLTSRD). A helical membrane pass occupies residues 194 to 212 (VIFVGLMLLSSGYMVTFLG). The Cytoplasmic segment spans residues 213–239 (RHKKQSQFLHITSFSLKPSAEKRAMRT). The helical transmembrane segment at 240–260 (ILCLMSFFVLMYTLDSIVSYI) threads the bilayer. The Extracellular portion of the chain corresponds to 261-267 (RSIDDGQ). A helical transmembrane segment spans residues 268–288 (IFYCVHIFTAHGYATVSPFLI). Residues 289–315 (LSTEKYIINIFRSTFGRMVTIILLRNR) are Cytoplasmic-facing.

The protein belongs to the G-protein coupled receptor 1 family.

The protein resides in the cell membrane. Its function is as follows. Putative pheromone receptor implicated in the regulation of social and reproductive behavior. This is Vomeronasal type-1 receptor 54 (Vmn1r54) from Mus musculus (Mouse).